The chain runs to 603 residues: Arginine--tRNA ligase (603 aa).

The 'HIGH' region signature appears at P143–H153.

It belongs to the class-I aminoacyl-tRNA synthetase family. In terms of assembly, monomer.

It is found in the cytoplasm. The catalysed reaction is tRNA(Arg) + L-arginine + ATP = L-arginyl-tRNA(Arg) + AMP + diphosphate. In Prochlorococcus marinus (strain MIT 9211), this protein is Arginine--tRNA ligase.